Reading from the N-terminus, the 205-residue chain is MGARFSRIAKRFLPKSKVRILMVGLDGSGKTTILYKLKLGEVVTTVPTIGFNLETVEYKGINFTVWDIGGQEKIRKLWRHYFQNAQGLIFVVDSSDSERLSEARNELHRILTDNELEGACVLVFANKQDSRNALPVAEVANKLGLHSLSKRCWLIQGTSAISGQGLYEGLEWLSTTIPNKPERSTSVSSFRSDSYERKLVRGPRY.

A lipid anchor (N-myristoyl glycine) is attached at G2. GTP contacts are provided by residues 24 to 31, 67 to 71, and 126 to 129; these read GLDGSGKT, DIGGQ, and NKQD.

This sequence belongs to the small GTPase superfamily. Arf family.

It is found in the golgi apparatus. Its function is as follows. GTP-binding protein involved in protein trafficking; may modulate vesicle budding and uncoating within the Golgi apparatus. The sequence is that of Probable ADP-ribosylation factor At2g15310 from Arabidopsis thaliana (Mouse-ear cress).